A 68-amino-acid chain; its full sequence is Conotoxin Ar5.3 (68 aa).

Residues 1-19 form the signal peptide; sequence MLCLPVFIILLLLASPAAS. Positions 20–53 are excised as a propeptide; sequence NPLEKRIQNDLIRAALEDADMENDPRSIIDSVKT.

This sequence belongs to the conotoxin T superfamily. In terms of processing, contains 2 disulfide bonds that can be either 'C1-C3, C2-C4' or 'C1-C4, C2-C3', since these disulfide connectivities have been observed for conotoxins with cysteine framework V (for examples, see AC P0DQQ7 and AC P81755). Expressed by the venom duct.

The protein localises to the secreted. This chain is Conotoxin Ar5.3, found in Conus arenatus (Sand-dusted cone).